The primary structure comprises 231 residues: Probable septum site-determining protein MinC (231 aa).

A disordered region spans residues Lys-102–Thr-125. Residues Ala-114–Thr-123 show a composition bias toward low complexity.

It belongs to the MinC family. In terms of assembly, interacts with MinD and FtsZ.

In terms of biological role, cell division inhibitor that blocks the formation of polar Z ring septums. Rapidly oscillates between the poles of the cell to destabilize FtsZ filaments that have formed before they mature into polar Z rings. Prevents FtsZ polymerization. In Escherichia coli O45:K1 (strain S88 / ExPEC), this protein is Probable septum site-determining protein MinC.